The primary structure comprises 385 residues: Tyrosine--tRNA ligase 1, cytoplasmic (385 aa).

A 'HIGH' region motif is present at residues 77–85; sequence PSGRMHIAQ. Tyr200, Gln204, Asp207, and Gln222 together coordinate L-tyrosine. The short motif at 259-263 is the 'KMSKS' region element; the sequence is KMSKS. Lys262 is a binding site for ATP.

It belongs to the class-I aminoacyl-tRNA synthetase family.

The protein resides in the cytoplasm. It is found in the cytosol. The catalysed reaction is tRNA(Tyr) + L-tyrosine + ATP = L-tyrosyl-tRNA(Tyr) + AMP + diphosphate + H(+). Its function is as follows. Catalyzes the attachment of tyrosine to tRNA(Tyr) in a two-step reaction: tyrosine is first activated by ATP to form Tyr-AMP and then transferred to the acceptor end of tRNA(Tyr). This is Tyrosine--tRNA ligase 1, cytoplasmic from Arabidopsis thaliana (Mouse-ear cress).